The chain runs to 460 residues: MYRKQPLESLCRDLRNGTVSAAEIREQALSAEARLKHLNCFIRDGDAEEQFSKASDAFKGGALWGIPVSFKDNICVKDLPVTAGTPGMTGCIATHDAFIVKKLKSLGAVVAGKNNMHELSFGITSVNVQWGTAGNPAAPGYCAGGSSGGCVSRPWSAGLYRSPSDTGGSVRIPAAFCGIAGFRPTTGRWASSGIIPVSHTKDAPGLLTRTVKDAAFLYGLISGSNTGEPSCEVRKLPCRVGLPASLWTGLDDHVERACFTAIRRMQDAGFDCVELDDGGIYALNETLTFTIPLYEFFTDFPRALLGLGWEQKIDAVFSHIADPHVRKIIHAHLAEELISRAEAASAVRDIGRLRLQMNALFQRQNIGLLAYPRHRVTSPCQVPPLSHVTGRSFFAEVIVNTDLASNAALPSVSLPVAPPGALPVGLSFDAPTGQDLFLLKTAAHIEMLLGTSEPDIRTYW.

Active-site charge relay system residues include Lys71 and Ser146. Catalysis depends on Ser169, which acts as the Acyl-ester intermediate.

It belongs to the amidase family.

The protein operates within plant hormone metabolism; auxin biosynthesis. Functionally, hydrolyzes indole-3-acetamide (IAM) into indole-3-acetic acid (IAA). This Pantoea agglomerans pv. gypsophilae (Erwinia herbicola) protein is Indoleacetamide hydrolase (iaaH).